A 188-amino-acid chain; its full sequence is Probable nicotinate-nucleotide adenylyltransferase (188 aa).

Belongs to the NadD family.

It catalyses the reaction nicotinate beta-D-ribonucleotide + ATP + H(+) = deamido-NAD(+) + diphosphate. It participates in cofactor biosynthesis; NAD(+) biosynthesis; deamido-NAD(+) from nicotinate D-ribonucleotide: step 1/1. In terms of biological role, catalyzes the reversible adenylation of nicotinate mononucleotide (NaMN) to nicotinic acid adenine dinucleotide (NaAD). This chain is Probable nicotinate-nucleotide adenylyltransferase, found in Listeria innocua serovar 6a (strain ATCC BAA-680 / CLIP 11262).